We begin with the raw amino-acid sequence, 546 residues long: Cholesterol oxidase (546 aa).

Residues 1–42 (MTAQQHLSRRRMLGMAAFGAAALAGGTTIAAPRAAAAAKSAA) constitute a signal peptide (tat-type signal). FAD contacts are provided by tyrosine 57, glycine 58, glutamate 77, glycine 152, asparagine 156, glycine 157, methionine 159, and valine 287. Catalysis depends on proton acceptor residues glutamate 398 and histidine 484. Residues glycine 512 and phenylalanine 524 each coordinate FAD.

It belongs to the GMC oxidoreductase family. As to quaternary structure, monomer. FAD is required as a cofactor. Post-translationally, predicted to be exported by the Tat system. The position of the signal peptide cleavage has been experimentally proven.

It is found in the secreted. It catalyses the reaction cholesterol + O2 = cholest-5-en-3-one + H2O2. The enzyme catalyses cholest-5-en-3-one = cholest-4-en-3-one. The protein operates within steroid metabolism; cholesterol degradation. In terms of biological role, bifunctional enzyme that catalyzes the oxidation and isomerization of cholesterol to cholestenone (cholest-4-en-3-one), an initial step in the cholesterol degradation process. The cholesterol degradation pathway allows the bacterium to utilize cholesterol as its sole source of carbon and energy. The sequence is that of Cholesterol oxidase from Streptomyces sp. (strain SA-COO).